A 465-amino-acid chain; its full sequence is Cysteine--tRNA ligase (465 aa).

C29 contributes to the Zn(2+) binding site. A 'HIGH' region motif is present at residues 31 to 41 (PTVYNYIHIGN). Residues C209, H234, and E238 each coordinate Zn(2+). The 'KMSKS' region signature appears at 266-270 (KMSKS). ATP is bound at residue K269. The residue at position 270 (S270) is a Phosphoserine.

The protein belongs to the class-I aminoacyl-tRNA synthetase family. In terms of assembly, monomer. Zn(2+) is required as a cofactor.

The protein resides in the cytoplasm. It catalyses the reaction tRNA(Cys) + L-cysteine + ATP = L-cysteinyl-tRNA(Cys) + AMP + diphosphate. This Bacillus cereus (strain G9842) protein is Cysteine--tRNA ligase.